The chain runs to 356 residues: uncharacterized protein (356 aa).

This is an uncharacterized protein from Acanthamoeba polyphaga (Amoeba).